The sequence spans 498 residues: ATP synthase subunit beta, chloroplastic (498 aa).

ATP is bound at residue 172-179 (GGAGVGKT).

It belongs to the ATPase alpha/beta chains family. As to quaternary structure, F-type ATPases have 2 components, CF(1) - the catalytic core - and CF(0) - the membrane proton channel. CF(1) has five subunits: alpha(3), beta(3), gamma(1), delta(1), epsilon(1). CF(0) has four main subunits: a(1), b(1), b'(1) and c(9-12).

It is found in the plastid. Its subcellular location is the chloroplast thylakoid membrane. The catalysed reaction is ATP + H2O + 4 H(+)(in) = ADP + phosphate + 5 H(+)(out). Functionally, produces ATP from ADP in the presence of a proton gradient across the membrane. The catalytic sites are hosted primarily by the beta subunits. The protein is ATP synthase subunit beta, chloroplastic of Licuala grandis (Ruffled fan palm).